A 144-amino-acid chain; its full sequence is Maximins 9/H3 (144 aa).

An N-terminal signal peptide occupies residues 1–18 (MNFKYIVAVSFLIASAYA). A propeptide spanning residues 19-43 (RSVKNDEQSLSQRDVLEEESLREIR) is cleaved from the precursor. At tyrosine 70 the chain carries Tyrosine amide. Positions 74–123 (TAEEHEVMKRLEAIMRDLDSLDHPEEASERETRGFNQDEIANLFTKKEKR) are excised as a propeptide. Isoleucine 143 carries the post-translational modification Isoleucine amide.

This sequence belongs to the bombinin family. As to expression, expressed by the skin glands.

It localises to the secreted. Its function is as follows. Maximin-9 shows antimicrobial activity against bacteria and against the fungus C.albicans. It has little hemolytic activity. Functionally, maximin-H3 shows antibacterial activity against both Gram-positive and Gram-negative bacteria. It also shows antimicrobial activity against the fungus C.albicans. Shows strong hemolytic activity. The chain is Maximins 9/H3 from Bombina maxima (Giant fire-bellied toad).